Consider the following 183-residue polypeptide: MSQPPKVLLLYAHPESQDSVANRVLLRPAQQLEHVTVHDLYAHYPDFFIDIHHEQQLLREHQVIVFQHPLYTYSCPALLKEWLDRVLSRGFASGMGGNALAGKYWRSVITTGEPEGAYRTGGYNRYPIEDILRPFELTAAMCHMHWLTPMLVYWARRQKPEVLESHATAYGDWLRNPLPHGGR.

It belongs to the NAD(P)H dehydrogenase (quinone) family. KefG subfamily. In terms of assembly, interacts with KefB.

The protein resides in the cell inner membrane. The catalysed reaction is a quinone + NADH + H(+) = a quinol + NAD(+). It catalyses the reaction a quinone + NADPH + H(+) = a quinol + NADP(+). Its function is as follows. Regulatory subunit of a potassium efflux system that confers protection against electrophiles. Required for full activity of KefB. This Serratia proteamaculans (strain 568) protein is Glutathione-regulated potassium-efflux system ancillary protein KefG.